A 394-amino-acid polypeptide reads, in one-letter code: Protein DDI1 homolog 2 (394 aa).

The Ubiquitin-like domain occupies 1-81 (MLITVYCVRR…VILRQRETPE (81 aa)). The segment at 82–128 (ARPAAPFPGLDFSTIAVPGSSSQPAPSQPQAPPPPPPDTSSFPQGLD) is disordered. Residues 107 to 119 (PSQPQAPPPPPPD) show a composition bias toward pro residues. The active site involves aspartate 247. A Ubiquitin-binding motif is present at residues 371–390 (EEIADRELAEVLQKSAEEAD).

It belongs to the DDI1 family. As to quaternary structure, homodimer.

The protein localises to the cytoplasm. The protein resides in the cytosol. It is found in the chromosome. Aspartic protease that mediates the cleavage of NFE2L1/NRF1 at 'Leu-104', thereby promoting release of NFE2L1/NRF1 from the endoplasmic reticulum membrane. Ubiquitination of NFE2L1/NRF1 is a prerequisite for cleavage, suggesting that DDI2 specifically recognizes and binds ubiquitinated NFE2L1/NRF1. Seems to act as a proteasomal shuttle which links the proteasome and replication fork proteins like RTF2. Required for cellular survival following replication stress. The sequence is that of Protein DDI1 homolog 2 (ddi2) from Xenopus tropicalis (Western clawed frog).